Consider the following 65-residue polypeptide: Antimicrobial peptide 1 (65 aa).

An N-terminal signal peptide occupies residues 1–27 (MAKVSSAYLKFALVMILLLSVISAVMS). Intrachain disulfides connect Cys-30/Cys-47, Cys-37/Cys-51, and Cys-46/Cys-62.

The protein belongs to the AMP family. Seed specific.

The protein resides in the secreted. Its function is as follows. Possesses antifungal activity. The polypeptide is Antimicrobial peptide 1 (Phytolacca americana (American pokeweed)).